Consider the following 603-residue polypeptide: Geraniol synthase, chloroplastic (603 aa).

The N-terminal 35 residues, 1 to 35 (MSSISQKVVIGLNKAAANNNLQNLDRRGFKTRCVS), are a transit peptide targeting the chloroplast. 5 residues coordinate (2E)-geranyl diphosphate: Arg-319, Asp-356, Asp-360, Arg-497, and Asp-500. Asp-356 and Asp-360 together coordinate Mg(2+). The short motif at 356 to 360 (DDVYD) is the DDXXD motif element. 3 residues coordinate Mg(2+): Asp-500, Thr-504, and Glu-508.

It belongs to the terpene synthase family. Tpsb subfamily. As to quaternary structure, monomer. Mg(2+) is required as a cofactor. It depends on Mn(2+) as a cofactor.

The protein localises to the plastid. Its subcellular location is the chloroplast. It carries out the reaction (2E)-geranyl diphosphate + H2O = (2E)-geraniol + diphosphate. It functions in the pathway secondary metabolite biosynthesis; terpenoid biosynthesis. Functionally, monoterpene synthase (mono-TPS) involved in the biosynthesis of monoterpenes natural products. Catalyzes the conversion of (2E)-geranyl diphosphate (GPP) into geraniol. This chain is Geraniol synthase, chloroplastic, found in Perilla frutescens var. hirtella (Perilla citriodora).